A 30-amino-acid polypeptide reads, in one-letter code: SFLNFFKGAAKNLLAAGLDKLKCKISGTQC.

Cys23 and Cys30 are disulfide-bonded.

As to expression, expressed by the skin glands.

Its subcellular location is the secreted. Antimicrobial peptide. Active against Gram-negative bacterium E.coli (MIC=12.5 uM) and against Gram-positive bacterium S.aureus (MIC=50 uM). The polypeptide is Ranatuerin-2OK (Nidirana okinavana (Kampira Falls frog)).